The following is a 409-amino-acid chain: Tyrosine--tRNA ligase (409 aa).

The 'HIGH' region motif lies at 54-63; sequence PTAPDIHLGH. The 'KMSKS' region motif lies at 238–242; sequence KMSKS. Lys-241 is a binding site for ATP. Residues 347–407 form the S4 RNA-binding domain; that stretch reads QGILRILREA…GKRKFARVKL (61 aa).

Belongs to the class-I aminoacyl-tRNA synthetase family. TyrS type 2 subfamily. Homodimer.

It localises to the cytoplasm. The enzyme catalyses tRNA(Tyr) + L-tyrosine + ATP = L-tyrosyl-tRNA(Tyr) + AMP + diphosphate + H(+). Its function is as follows. Catalyzes the attachment of tyrosine to tRNA(Tyr) in a two-step reaction: tyrosine is first activated by ATP to form Tyr-AMP and then transferred to the acceptor end of tRNA(Tyr). The sequence is that of Tyrosine--tRNA ligase from Bordetella bronchiseptica (strain ATCC BAA-588 / NCTC 13252 / RB50) (Alcaligenes bronchisepticus).